The sequence spans 255 residues: Putative keratin-87 protein (255 aa).

The region spanning 1–255 (MEANSGRLAS…SRGCVRALVL (255 aa)) is the IF rod domain. 2 coiled-coil regions span residues 19–81 (LEGY…EIRV) and 147–227 (LRRT…VMNS).

This sequence belongs to the intermediate filament family. As to quaternary structure, heterotetramer of two type I and two type II keratins.

The chain is Putative keratin-87 protein (KRT87P) from Homo sapiens (Human).